A 227-amino-acid chain; its full sequence is Phosphoribosylaminoimidazole-succinocarboxamide synthase (227 aa).

This sequence belongs to the SAICAR synthetase family.

It catalyses the reaction 5-amino-1-(5-phospho-D-ribosyl)imidazole-4-carboxylate + L-aspartate + ATP = (2S)-2-[5-amino-1-(5-phospho-beta-D-ribosyl)imidazole-4-carboxamido]succinate + ADP + phosphate + 2 H(+). It functions in the pathway purine metabolism; IMP biosynthesis via de novo pathway; 5-amino-1-(5-phospho-D-ribosyl)imidazole-4-carboxamide from 5-amino-1-(5-phospho-D-ribosyl)imidazole-4-carboxylate: step 1/2. This is Phosphoribosylaminoimidazole-succinocarboxamide synthase from Clostridium tetani (strain Massachusetts / E88).